A 271-amino-acid polypeptide reads, in one-letter code: N-acylmannosamine 1-dehydrogenase (271 aa).

Position 20 to 44 (20 to 44 (VTGAAGGIGRATVEAYLREGASVVA)) interacts with NAD(+). Substrate is bound at residue Ser-153. Catalysis depends on Tyr-166, which acts as the Proton acceptor.

This sequence belongs to the short-chain dehydrogenases/reductases (SDR) family.

The enzyme catalyses an N-acyl-D-mannosamine + NAD(+) = an N-acyl-D-mannosaminolactone + NADH + H(+). Acts on acetyl-D-mannosamine and glycolyl-D-mannosamine. The chain is N-acylmannosamine 1-dehydrogenase from Flavobacterium sp. (strain 141-8).